The following is a 229-amino-acid chain: NAD(P)H-quinone oxidoreductase subunit K, chloroplastic (229 aa).

4 residues coordinate [4Fe-4S] cluster: Cys43, Cys44, Cys108, and Cys139.

Belongs to the complex I 20 kDa subunit family. As to quaternary structure, NDH is composed of at least 16 different subunits, 5 of which are encoded in the nucleus. [4Fe-4S] cluster is required as a cofactor.

The protein resides in the plastid. Its subcellular location is the chloroplast thylakoid membrane. It catalyses the reaction a plastoquinone + NADH + (n+1) H(+)(in) = a plastoquinol + NAD(+) + n H(+)(out). It carries out the reaction a plastoquinone + NADPH + (n+1) H(+)(in) = a plastoquinol + NADP(+) + n H(+)(out). In terms of biological role, NDH shuttles electrons from NAD(P)H:plastoquinone, via FMN and iron-sulfur (Fe-S) centers, to quinones in the photosynthetic chain and possibly in a chloroplast respiratory chain. The immediate electron acceptor for the enzyme in this species is believed to be plastoquinone. Couples the redox reaction to proton translocation, and thus conserves the redox energy in a proton gradient. This Coffea arabica (Arabian coffee) protein is NAD(P)H-quinone oxidoreductase subunit K, chloroplastic.